The sequence spans 185 residues: MDLLTSSLIGIGLSMDCFAVALAIGTSERLPLVRSALVIAASFGIFQAGMTIAGWIAGASLYTEISSYGSWIAFLLLAGIGIKMIYDGIREEHEPTLSGLHAIPVILLSLATSIDAFAAGVSFGVLGSTVLMPALAIGLVCFVVSCAGVFCGMRLEKLLGNRTEIFGGVILILIGIQILTDILPL.

Helical transmembrane passes span 4–24, 36–56, 65–85, 105–125, 130–150, and 165–185; these read LTSS…ALAI, ALVI…AGWI, ISSY…IKMI, VILL…SFGV, VLMP…AGVF, and IFGG…ILPL.

It belongs to the MntP (TC 9.B.29) family.

The protein resides in the cell membrane. Functionally, probably functions as a manganese efflux pump. This is Putative manganese efflux pump MntP from Methanoregula boonei (strain DSM 21154 / JCM 14090 / 6A8).